The chain runs to 216 residues: GTP cyclohydrolase 1 (216 aa).

Residues C108, H111, and C179 each contribute to the Zn(2+) site.

This sequence belongs to the GTP cyclohydrolase I family. In terms of assembly, toroid-shaped homodecamer, composed of two pentamers of five dimers.

It catalyses the reaction GTP + H2O = 7,8-dihydroneopterin 3'-triphosphate + formate + H(+). Its pathway is cofactor biosynthesis; 7,8-dihydroneopterin triphosphate biosynthesis; 7,8-dihydroneopterin triphosphate from GTP: step 1/1. This Shewanella amazonensis (strain ATCC BAA-1098 / SB2B) protein is GTP cyclohydrolase 1.